An 86-amino-acid polypeptide reads, in one-letter code: Large ribosomal subunit protein bL27 (86 aa).

A disordered region spans residues 1-26 (MATKKAGGSSRNGRDSAGRRLGVKQS).

The protein belongs to the bacterial ribosomal protein bL27 family.

The chain is Large ribosomal subunit protein bL27 from Rickettsia canadensis (strain McKiel).